Consider the following 475-residue polypeptide: U3 small nucleolar RNA-interacting protein 2 (475 aa).

The segment at 1-75 is disordered; that stretch reads MSATAAARKR…EEEEELEETA (75 aa). The short motif at 8–40 is the Nuclear localization signal element; it reads RKRGKPASGAGAGAGAGKRRRKADSAGDRGKSK. R10 is subject to Omega-N-methylarginine. N6-acetyllysine occurs at positions 12 and 25. Phosphoserine is present on residues S50, S51, S53, and S57. Positions 65 to 74 are enriched in acidic residues; it reads EEEEEELEET. K113 participates in a covalent cross-link: Glycyl lysine isopeptide (Lys-Gly) (interchain with G-Cter in SUMO2). WD repeat units lie at residues 144–183, 197–236, 239–278, 281–320, 322–360, 374–413, and 419–460; these read GHQLSITCLVVTPDDSAIFSAAKDCSIIKWSVESGRKLHV, GHSSHVLCMAISSDGKYLASGDRSKLILIWEAQSCQHLYT, GHRDAVSGLAFRRGTHQLYSTSHDRSVKVWNVAENSYVET, GHQDAVAALDALSRECCVTAGGRDGTVRVWKIPEESQLVF, GHQGSIDCIHLINEEHMVSGADDGSVALWGLSKKRPLAL, EQPFWISSVAALLNTDLVATGSHSSCVRLWQCGEGFRQLD, and PLVG…NSVC.

It belongs to the WD repeat RRP9 family. As to quaternary structure, interacts specifically with the U3 small nucleolar RNA (U3 snoRNA). Binds a sub-fragment of the U3 snoRNA surrounding the B/C motif (3UBC). This association with the U3BC RNA is dependent on the binding of a protein called 15.5K to the box B/C motif. The association of the protein with the U3BC RNA was found to be also dependent on a conserved RNA structure that flanks the box B/C motif. Part of the small subunit (SSU) processome, composed of more than 70 proteins and the RNA chaperone small nucleolar RNA (snoRNA) U3. Acetylation at Lys-12 and Lys-25 by KAT2B/PCAF under stress impairs pre-rRNA processing. Deacetylation by SIRT7 enhances RRP9-binding to U3 snoRNA, which is a prerequisite for pre-rRNA processing.

It is found in the nucleus. The protein resides in the nucleolus. Component of a nucleolar small nuclear ribonucleoprotein particle (snoRNP) thought to participate in the processing and modification of pre-ribosomal RNA (pre-rRNA). Part of the small subunit (SSU) processome, first precursor of the small eukaryotic ribosomal subunit. During the assembly of the SSU processome in the nucleolus, many ribosome biogenesis factors, an RNA chaperone and ribosomal proteins associate with the nascent pre-rRNA and work in concert to generate RNA folding, modifications, rearrangements and cleavage as well as targeted degradation of pre-ribosomal RNA by the RNA exosome. The protein is U3 small nucleolar RNA-interacting protein 2 of Homo sapiens (Human).